The sequence spans 192 residues: Adenylate kinase (192 aa).

10–18 lines the ATP pocket; the sequence is GVPGVGSTT.

It belongs to the archaeal adenylate kinase family. Monomer.

The protein resides in the cytoplasm. The enzyme catalyses AMP + ATP = 2 ADP. The polypeptide is Adenylate kinase (adkA) (Methanocaldococcus jannaschii (strain ATCC 43067 / DSM 2661 / JAL-1 / JCM 10045 / NBRC 100440) (Methanococcus jannaschii)).